The sequence spans 872 residues: Cellulose synthase catalytic subunit [UDP-forming] (872 aa).

The next 4 membrane-spanning stretches (helical) occupy residues 30–50 (SAFS…FIPL), 151–171 (ILGI…TQPF), 173–193 (PLAQ…VRRM), and 230–250 (LVCG…LVLG). The segment at 271 to 364 (LWPSVDIFVP…FVSIFDCDHV (94 aa)) is catalytic subdomain A. Asp313 is an active-site residue. The substrate site is built by Asp360 and Asp362. The interval 441-501 (KPLDEIGGIA…GQRIRWARGM (61 aa)) is catalytic subdomain B. Residue Asp457 is part of the active site. The next 5 helical transmembrane spans lie at 525–545 (VNAM…TAPL), 547–567 (FLLL…LFVL), 592–612 (IYET…LINP), 640–660 (IFLV…YFYG), and 668–688 (VVVS…AVAV). Positions 694–790 (QVRRSHRVEM…QHIDFVQCTF (97 aa)) constitute a PilZ domain. Residues 833-853 (SVKGIFRVLTSLVSWVVSFIP) form a helical membrane-spanning segment.

This sequence belongs to the glycosyltransferase 2 family. Requires Mg(2+) as cofactor.

The protein resides in the cell inner membrane. The enzyme catalyses [(1-&gt;4)-beta-D-glucosyl](n) + UDP-alpha-D-glucose = [(1-&gt;4)-beta-D-glucosyl](n+1) + UDP + H(+). It participates in glycan metabolism; bacterial cellulose biosynthesis. With respect to regulation, activated by bis-(3'-5') cyclic diguanylic acid (c-di-GMP). Its function is as follows. Catalytic subunit of cellulose synthase. It polymerizes uridine 5'-diphosphate glucose to cellulose, which is produced as an extracellular component for mechanical and chemical protection at the onset of the stationary phase, when the cells exhibit multicellular behavior (rdar morphotype). Coexpression of cellulose and thin aggregative fimbriae (curli fimbrae or fibers) leads to a hydrophobic network with tightly packed cells embedded in a highly inert matrix that confers cohesion, elasticity and tissue-like properties to colonies. The polypeptide is Cellulose synthase catalytic subunit [UDP-forming] (bcsA) (Escherichia coli (strain K12)).